The sequence spans 314 residues: tRNA dimethylallyltransferase 1 (314 aa).

Position 8-15 (8-15 (GPTGSGKS)) interacts with ATP. Substrate is bound at residue 10 to 15 (TGSGKS).

Belongs to the IPP transferase family. Monomer. It depends on Mg(2+) as a cofactor.

It carries out the reaction adenosine(37) in tRNA + dimethylallyl diphosphate = N(6)-dimethylallyladenosine(37) in tRNA + diphosphate. Its function is as follows. Catalyzes the transfer of a dimethylallyl group onto the adenine at position 37 in tRNAs that read codons beginning with uridine, leading to the formation of N6-(dimethylallyl)adenosine (i(6)A). This is tRNA dimethylallyltransferase 1 from Mycobacterium ulcerans (strain Agy99).